Consider the following 257-residue polypeptide: NAD kinase (257 aa).

Asp-44 (proton acceptor) is an active-site residue. NAD(+)-binding positions include 44–45, Arg-49, 116–117, Asp-146, Ala-154, and 157–162; these read DG, NE, and TAYNLS.

Belongs to the NAD kinase family. A divalent metal cation serves as cofactor.

The protein resides in the cytoplasm. The enzyme catalyses NAD(+) + ATP = ADP + NADP(+) + H(+). In terms of biological role, involved in the regulation of the intracellular balance of NAD and NADP, and is a key enzyme in the biosynthesis of NADP. Catalyzes specifically the phosphorylation on 2'-hydroxyl of the adenosine moiety of NAD to yield NADP. The chain is NAD kinase from Rhizorhabdus wittichii (strain DSM 6014 / CCUG 31198 / JCM 15750 / NBRC 105917 / EY 4224 / RW1) (Sphingomonas wittichii).